Reading from the N-terminus, the 385-residue chain is ELAV-like protein 4 (385 aa).

The tract at residues 12–48 (TMEPQVSNGPTSNTSNGPSSNNRNCPSPMQTGAATDD) is disordered. The segment covering 18-33 (SNGPTSNTSNGPSSNN) has biased composition (low complexity). The segment covering 34-44 (RNCPSPMQTGA) has biased composition (polar residues). The residue at position 38 (Ser-38) is a Phosphoserine. RRM domains lie at 51 to 129 (TNLI…YARP) and 137 to 217 (ANLY…FANN). Ser-233 carries the post-translational modification Phosphoserine. An Asymmetric dimethylarginine; by CARM1; alternate modification is found at Arg-248. Arg-248 carries the post-translational modification Omega-N-methylarginine; by CARM1; alternate. The RRM 3 domain maps to 302–380 (WCIFVYNLSP…RVLQVSFKTN (79 aa)).

The protein belongs to the RRM elav family. Component of a TAU mRNP complex, at least composed of IGF2BP1, ELAVL4 and G3BP. Associates with the EIF4F cap-binding complex, composed of EIF4G, EIF4A, EIF4E and PABP. Within the EIF4F cap-binding complex, interacts with EIF4A. Interacts with SMN (via Tudor domain) in an RNA-independent manner; the interaction is required for localization of ELAVL4 to RNA granules. Interacts with MAP1 light chain LC1 (via C-terminus); the interaction contributes to the association of ELAVL4 with microtubules. Interacts with MAP1 light chain LC2. Methylated by CARM1, which leads to reduced RNA-binding activity and enhanced interaction with SMN. Methylation at Arg-248 by CARM1 weakens protective binding to the 3'UTR of CDKN1A mRNA and down-regulates CDKN1A protein expression, thereby maintaining cells in a proliferative state. Methylation is inhibited by NGF, which facilitates neurite outgrowth. As to expression, expressed in the brain, including the hippocampus, and in pancreatic beta cells (at protein level). Expressed in pyramidal neurons of the hippocampal CA3 and CA1 region and in the hilus but not in dentate granule cells (at protein level). Expressed in the dorsal root ganglion and the spinal cord (at protein level). Expressed in neural stem and progenitor cells (at protein level). Expressed in radial glia-like cells and in transient amplifying cells in the subventricular zone (SVZ), and in immature neurons both in the SVZ and the rostral migratory stream as well as in mature neurons in the olfactory bulb (at protein level). Expressed in testis and in the brain, including the hippocampus, the neocortex and the cerebellum. Expressed in lower- but not upper-layer primary neurons of the mature neocortex, in the hippocampal regions CA1-3 and the dentate gyrus. Expressed in the mitral and granule cells of the olfactory bulb, cerebral cortex, entorhinal cortex, thalamus, medial habenula, amygdala, granule cells of the cerebellum, pons, olivary nucleus, dorsal and ventral spinal cord and in dorsal root ganglia. Expressed in motor neurons. Isoform 4: Expressed in the brain. Isoform 5: Expressed in the brain. Isoform 6: Expressed in the brain. Isoform 7: Expressed in the brain. Isoform 8: Expressed in the brain. Isoform 9: Expressed in the brain. Isoform 10: Expressed in the brain. Isoform 11: Expressed in the brain.

It localises to the cytoplasm. Its subcellular location is the perikaryon. The protein localises to the cell projection. It is found in the dendrite. The protein resides in the axon. It localises to the growth cone. In terms of biological role, RNA-binding protein that is involved in the post-transcriptional regulation of mRNAs. Plays a role in the regulation of mRNA stability, alternative splicing and translation. Binds to AU-rich element (ARE) sequences in the 3' untranslated region (3'UTR) of target mRNAs, including GAP43, VEGF, FOS, CDKN1A and ACHE mRNA. Many of the target mRNAs are coding for RNA-binding proteins, transcription factors and proteins involved in RNA processing and/or neuronal development and function. By binding to the mRNA 3'UTR, decreases mRNA deadenylation and thereby contributes to the stabilization of mRNA molecules and their protection from decay. Also binds to the polyadenylated (poly(A)) tail in the 3'UTR of mRNA, thereby increasing its affinity for mRNA binding. Mainly plays a role in neuron-specific RNA processing by stabilization of mRNAs such as GAP43, ACHE and mRNAs of other neuronal proteins, thereby contributing to the differentiation of neural progenitor cells, nervous system development, learning and memory mechanisms. Involved in the negative regulation of the proliferative activity of neuronal stem cells and in the positive regulation of neuronal differentiation of neural progenitor cells. Promotes neuronal differentiation of neural stem/progenitor cells in the adult subventricular zone of the hippocampus by binding to and stabilizing SATB1 mRNA. Binds and stabilizes MSI1 mRNA in neural stem cells. Exhibits increased binding to ACHE mRNA during neuronal differentiation, thereby stabilizing ACHE mRNA and enhancing its expression. Protects CDKN1A mRNA from decay by binding to its 3'-UTR. May bind to APP and BACE1 mRNAS and the BACE1AS lncRNA and enhance their stabilization. Plays a role in neurite outgrowth and in the establishment and maturation of dendritic arbors, thereby contributing to neocortical and hippocampal circuitry function. Stabilizes GAP43 mRNA and protects it from decay during postembryonic development in the brain. By promoting the stabilization of GAP43 mRNA, plays a role in NGF-mediated neurite outgrowth. Binds to BDNF long 3'UTR mRNA, thereby leading to its stabilization and increased dendritic translation after activation of PKC. By increasing translation of BDNF after nerve injury, may contribute to nerve regeneration. Acts as a stabilizing factor by binding to the 3'UTR of NOVA1 mRNA, thereby increasing its translation and enhancing its functional activity in neuron-specific splicing. Stimulates translation of mRNA in a poly(A)- and cap-dependent manner, possibly by associating with the EIF4F cap-binding complex. May also negatively regulate translation by binding to the 5'UTR of Ins2 mRNA, thereby repressing its translation. Upon glucose stimulation, Ins2 mRNA is released from ELAVL4 and translational inhibition is abolished. Also plays a role in the regulation of alternative splicing. May regulate alternative splicing of CALCA pre-mRNA into Calcitonin and Calcitonin gene-related peptide 1 (CGRP) by competing with splicing regulator TIAR for binding to U-rich sequences of CALCA pre-mRNA. The polypeptide is ELAV-like protein 4 (Elavl4) (Mus musculus (Mouse)).